Here is a 613-residue protein sequence, read N- to C-terminus: MEKPVLQTQPSMLPFFDTAHAVNLLRGIHELRAERKFFDVTLCAEGKEFHCHRTVLAAASMYFRAMFAGTLRESVMDRVVLHEVSAELLGLLVDFCYTGRVTVTHDNVDLLLKTADLFQFPSVKEACCAFLEQRLDVSNCLEIQDFAEAYACRELAASARRFVLKNIVELAKSMDFERLSWKRLLEFVSDDGLCVDKEETAYQIAVRWVKADLQHRLHYWPELLQQVRLPFVRRFYLLAHVESDPLVYLSPACLRLVSEARSFQSYEYDRHDRPGHRMRPRPSTGLAEILVVVGGCDQDCDELVTVDCYNPQTGQWRYLAEFPDHLGGGYSIAALGNDIYVTGGSDGSRLYDCVWRYNSSVNEWTEVSPMLKAREYHSSCVLKGQLYVVGSDSTERYDHTIDCWEALPPMPHPMDNCSTTACRGRLYAIGSLTGEDTMAIQCYDAESNRWSLLNSGELPPWSFAPKSVTLNGLIYFVRDDSAEVDVYNPQKNEWDKISPMTQVHVGGSVSALGGRLYVSGGYDNTFELSDVVEVYDPSSRSWSPAGRLPQPTFWHGSVSIFRQFMPLVQSTFEPIDIPEANAIHLHRHHRNQALHNHNNNVNQNHNQEVNQVH.

In terms of domain architecture, BTB spans phenylalanine 38–histidine 105. One can recognise a BACK domain in the interval cysteine 140–glutamate 242. Kelch repeat units follow at residues isoleucine 289–asparagine 337, aspartate 338–glycine 384, leucine 386–glycine 424, leucine 426–glycine 472, isoleucine 474–glycine 514, and arginine 515–arginine 562.

In terms of assembly, component of the BCR(KLHL21) E3 ubiquitin ligase complex, at least composed of cul3, klhl21 and rbx1.

It is found in the cytoplasm. It localises to the cytoskeleton. The protein localises to the spindle. The protein operates within protein modification; protein ubiquitination. In terms of biological role, substrate-specific adapter of BCR (BTB-CUL3-RBX1) E3 ubiquitin-protein ligase complex required for efficient chromosome alignment and cytokinesis. The BCR(KLHL21) E3 ubiquitin ligase complex regulates localization of the chromosomal passenger complex (CPC) from chromosomes to the spindle midzone in anaphase and mediates the ubiquitination of AURKB. The protein is Kelch-like protein 21 (klhl21) of Danio rerio (Zebrafish).